We begin with the raw amino-acid sequence, 274 residues long: ATP synthase subunit delta (274 aa).

It belongs to the ATPase delta chain family. F-type ATPases have 2 components, F(1) - the catalytic core - and F(0) - the membrane proton channel. F(1) has five subunits: alpha(3), beta(3), gamma(1), delta(1), epsilon(1). F(0) has three main subunits: a(1), b(2) and c(10-14). The alpha and beta chains form an alternating ring which encloses part of the gamma chain. F(1) is attached to F(0) by a central stalk formed by the gamma and epsilon chains, while a peripheral stalk is formed by the delta and b chains.

Its subcellular location is the cell membrane. Its function is as follows. F(1)F(0) ATP synthase produces ATP from ADP in the presence of a proton or sodium gradient. F-type ATPases consist of two structural domains, F(1) containing the extramembraneous catalytic core and F(0) containing the membrane proton channel, linked together by a central stalk and a peripheral stalk. During catalysis, ATP synthesis in the catalytic domain of F(1) is coupled via a rotary mechanism of the central stalk subunits to proton translocation. Functionally, this protein is part of the stalk that links CF(0) to CF(1). It either transmits conformational changes from CF(0) to CF(1) or is implicated in proton conduction. This chain is ATP synthase subunit delta, found in Acidothermus cellulolyticus (strain ATCC 43068 / DSM 8971 / 11B).